A 117-amino-acid chain; its full sequence is LPGARCAYDMTQTPASVEVAVGGTVTIKCQASQSISTYLSWYQQKPGQRPKLLIYRASTLASGVSSRFKGSGSGTEFTLTISGVECADAATYYCQQGWSSSNVENVFGGGTEVVVKG.

An N-terminal signal peptide occupies residues 1–6; that stretch reads LPGARC. The interval 7 to 29 is framework-1; it reads AYDMTQTPASVEVAVGGTVTIKC. The cysteines at positions 29 and 86 are disulfide-linked. The complementarity-determining-1 stretch occupies residues 30–40; the sequence is QASQSISTYLS. The segment at 41–55 is framework-2; the sequence is WYQQKPGQRPKLLIY. A complementarity-determining-2 region spans residues 56–62; sequence RASTLAS. The tract at residues 63-94 is framework-3; the sequence is GVSSRFKGSGSGTEFTLTISGVECADAATYYC. Residues 95–106 form a complementarity-determining-3 region; it reads QQGWSSSNVENV. Residues 107 to 116 form a framework-4 region; sequence FGGGTEVVVK.

The chain is Ig kappa chain V region 12F2 from Oryctolagus cuniculus (Rabbit).